A 40-amino-acid chain; its full sequence is Protamine-2 (40 aa).

A disordered region spans residues 1-40 (MPPRRKRVSSAPRRRRRTYRRTTAHKHQERPVHRRRRRRH).

Testis.

The protein resides in the nucleus. It localises to the chromosome. Functionally, protamines substitute for histones in the chromatin of sperm during the haploid phase of spermatogenesis. They compact sperm DNA into a highly condensed, stable and inactive complex. This chain is Protamine-2 (PBP2), found in Bufo japonicus (Japanese common toad).